A 226-amino-acid chain; its full sequence is Large ribosomal subunit protein uL1 (226 aa).

It belongs to the universal ribosomal protein uL1 family. As to quaternary structure, part of the 50S ribosomal subunit.

In terms of biological role, binds directly to 23S rRNA. The L1 stalk is quite mobile in the ribosome, and is involved in E site tRNA release. Its function is as follows. Protein L1 is also a translational repressor protein, it controls the translation of the L11 operon by binding to its mRNA. This chain is Large ribosomal subunit protein uL1, found in Borrelia garinii subsp. bavariensis (strain ATCC BAA-2496 / DSM 23469 / PBi) (Borreliella bavariensis).